Consider the following 366-residue polypeptide: Outer membrane protein IIIA (366 aa).

The N-terminal stretch at 1–22 (MNIRMVLLASAAAFAASTPVLA) is a signal peptide.

The protein belongs to the alphaproteobacteria porin family. As to quaternary structure, forms calcium-stabilized oligomers. Attached covalently to peptidoglycan.

The protein resides in the cell outer membrane. Functionally, may act as an outer membrane pore. This chain is Outer membrane protein IIIA (ropA), found in Rhizobium leguminosarum bv. viciae.